Consider the following 609-residue polypeptide: Threonine--tRNA ligase (609 aa).

The tract at residues D215–P506 is catalytic. Residues C307, H358, and H483 each contribute to the Zn(2+) site.

The protein belongs to the class-II aminoacyl-tRNA synthetase family. Homodimer. It depends on Zn(2+) as a cofactor.

The protein localises to the cytoplasm. It catalyses the reaction tRNA(Thr) + L-threonine + ATP = L-threonyl-tRNA(Thr) + AMP + diphosphate + H(+). Its function is as follows. Catalyzes the attachment of threonine to tRNA(Thr) in a two-step reaction: L-threonine is first activated by ATP to form Thr-AMP and then transferred to the acceptor end of tRNA(Thr). Also edits incorrectly charged L-seryl-tRNA(Thr). This is Threonine--tRNA ligase from Campylobacter hominis (strain ATCC BAA-381 / DSM 21671 / CCUG 45161 / LMG 19568 / NCTC 13146 / CH001A).